The following is a 333-amino-acid chain: Protein APEM9 (333 aa).

The Cytoplasmic portion of the chain corresponds to 1–90; sequence MEATDIWGEI…ELRDVFGEVA (90 aa). Residues 91–102 traverse the membrane as a helical segment; sequence AIPVQVLLTGVC. At 103 to 268 the chain is on the peroxisomal side; it reads LQISNGSYLG…KVGNTQFSMS (166 aa). A helical membrane pass occupies residues 269–285; it reads RGKVAVSLVGLIICYAL. Residues 286–333 lie on the Cytoplasmic side of the membrane; the sequence is KRKRAALIRIIRRQMESTRKAIVDFWKLAFSYQVNPLAAIQSIPSTTT.

In terms of assembly, interacts with PEX6 and PEX19-1, but not with PEX1. Interacts (via N-terminus) with PEX13, and (via N-terminus and C-terminus) with PEX16. As to expression, expressed in roots, leaves, stems, flowers, buds and fruits.

The protein resides in the peroxisome membrane. In terms of biological role, involved in peroxisome biogenesis and matrix protein import. Required for pollen maturation and in vivo germination via its role in peroxisomal function, which partially involves jasmonic acid biosynthesis. Transported to peroxisomes via the interaction with PEX19-1. Required for peroxisomal protein import by acting as an anchoring protein for the AAA ATPase complex, which consists of PEX1 and PEX6. The sequence is that of Protein APEM9 from Arabidopsis thaliana (Mouse-ear cress).